We begin with the raw amino-acid sequence, 309 residues long: Ribonuclease Z (309 aa).

His-63, His-65, Asp-67, His-68, His-145, Asp-216, and His-274 together coordinate Zn(2+). The Proton acceptor role is filled by Asp-67.

Belongs to the RNase Z family. As to quaternary structure, homodimer. Requires Zn(2+) as cofactor.

The catalysed reaction is Endonucleolytic cleavage of RNA, removing extra 3' nucleotides from tRNA precursor, generating 3' termini of tRNAs. A 3'-hydroxy group is left at the tRNA terminus and a 5'-phosphoryl group is left at the trailer molecule.. Its function is as follows. Zinc phosphodiesterase, which displays some tRNA 3'-processing endonuclease activity. Probably involved in tRNA maturation, by removing a 3'-trailer from precursor tRNA. The protein is Ribonuclease Z of Streptococcus equi subsp. equi (strain 4047).